Consider the following 437-residue polypeptide: UDP-N-acetylmuramoylalanine--D-glutamate ligase (437 aa).

Position 112-118 (112-118) interacts with ATP; that stretch reads GSNGKST.

This sequence belongs to the MurCDEF family.

Its subcellular location is the cytoplasm. The enzyme catalyses UDP-N-acetyl-alpha-D-muramoyl-L-alanine + D-glutamate + ATP = UDP-N-acetyl-alpha-D-muramoyl-L-alanyl-D-glutamate + ADP + phosphate + H(+). The protein operates within cell wall biogenesis; peptidoglycan biosynthesis. In terms of biological role, cell wall formation. Catalyzes the addition of glutamate to the nucleotide precursor UDP-N-acetylmuramoyl-L-alanine (UMA). This chain is UDP-N-acetylmuramoylalanine--D-glutamate ligase, found in Haemophilus influenzae (strain 86-028NP).